A 1077-amino-acid chain; its full sequence is Teashirt homolog 1-B (1077 aa).

Disordered stretches follow at residues 1–110 (MPRR…NASY) and 142–179 (NEKA…SCTN). The span at 26 to 36 (TEEDNLEDDGL) shows a compositional bias: acidic residues. Positions 56 to 69 (TQSYQNSPISSATN) are enriched in polar residues. Positions 160 to 179 (SGPTSDPGTPTTITSSSCTN) are enriched in low complexity. The C2H2-type 1 zinc-finger motif lies at 248–272 (FRCKDCSAAYDTLVELTVHMNETGH). The segment covering 274–286 (RDDNRDREAERTK) has biased composition (basic and acidic residues). The disordered stretch occupies residues 274-300 (RDDNRDREAERTKRWSKPRKRSLMEME). Residues 309–333 (LKCMYCGHSFESLQDLSVHMIKTKH) form a C2H2-type 2 zinc finger. The interval 362–394 (ALPDSPEQAGISPGASVSESAKDPKAANPYVTP) is disordered. Residues 418-442 (LKCMECGSSHDTLQQLTAHMMVTGH) form a C2H2-type 3 zinc finger. Disordered regions lie at residues 473 to 530 (PPTT…KIEP) and 849 to 873 (GRLT…SSFE). Residues 497–529 (HSEEKKDPEKEKVNIGEVEKKIKEENEDPEKIE) are compositionally biased toward basic and acidic residues. Polar residues predominate over residues 853 to 862 (PKSSTPSTVS). The segment at residues 885-955 (RKGRQSNWNP…NVKYQLRRTG (71 aa)) is a DNA-binding region (homeobox). 2 consecutive C2H2-type zinc fingers follow at residues 970–992 (FFCN…LETH) and 1037–1060 (FQCK…SKTH).

Belongs to the teashirt C2H2-type zinc-finger protein family.

It localises to the nucleus. Its function is as follows. Probable transcriptional regulator involved in developmental processes. May act as a transcriptional repressor (Potential). Involved in two major neuronal regionalization processes: primary anteroposterior (AP) axis patterning of the CNS and segmentation of the cranial neuronal crest (CNS) development. In Xenopus laevis (African clawed frog), this protein is Teashirt homolog 1-B (tshz1-b).